A 330-amino-acid chain; its full sequence is Aspartate--ammonia ligase (330 aa).

The protein belongs to the class-II aminoacyl-tRNA synthetase family. AsnA subfamily.

Its subcellular location is the cytoplasm. The enzyme catalyses L-aspartate + NH4(+) + ATP = L-asparagine + AMP + diphosphate + H(+). It functions in the pathway amino-acid biosynthesis; L-asparagine biosynthesis; L-asparagine from L-aspartate (ammonia route): step 1/1. The chain is Aspartate--ammonia ligase from Haemophilus influenzae (strain PittEE).